We begin with the raw amino-acid sequence, 835 residues long: Pre-mRNA-processing protein 40C (835 aa).

Residues 1-20 (MEGENTTDPPYTTAASSGQS) are compositionally biased toward polar residues. The segment at 1–22 (MEGENTTDPPYTTAASSGQSIF) is disordered. WW domains follow at residues 243–276 (GNRL…KPPG) and 295–328 (SLPG…IPAE). A disordered region spans residues 397–459 (SGMPVSSTIT…DSGPSKEECS (63 aa)). Over residues 400–428 (PVSSTITSEANSGKTTEVTPSGESGNSTG) the composition is skewed to polar residues. FF domains are found at residues 455–509 (KEEC…YVKT), 519–577 (RAAH…RVLS), and 590–643 (RAAA…YIAE). Disordered regions lie at residues 649-677 (RGDD…RKER) and 714-738 (TESK…PADK). FF domains follow at residues 691–748 (RKEA…HVKS) and 750–815 (YERC…YVED).

Belongs to the PRPF40 family. Interacts (via the WW domains) with the phosphorylated C-terminal domain of NRPB1 (via CTD domain). In terms of tissue distribution, expressed in roots, shoots, rosette leaves, cauline leaves, stems and flowers.

It is found in the nucleus. Its function is as follows. Binds the phosphorylated C-terminal domain (CTD) of the largest subunit of RNA polymerase II and functions as a scaffold for RNA processing machineries. May be involved in pre-mRNA splicing. This Arabidopsis thaliana (Mouse-ear cress) protein is Pre-mRNA-processing protein 40C.